The chain runs to 370 residues: Flagellar P-ring protein (370 aa).

The N-terminal stretch at 1–21 is a signal peptide; that stretch reads MRLFSVVLAVFTLLLPSQAFA.

Belongs to the FlgI family. As to quaternary structure, the basal body constitutes a major portion of the flagellar organelle and consists of four rings (L,P,S, and M) mounted on a central rod.

The protein resides in the periplasm. It localises to the bacterial flagellum basal body. In terms of biological role, assembles around the rod to form the L-ring and probably protects the motor/basal body from shearing forces during rotation. The chain is Flagellar P-ring protein from Alteromonas mediterranea (strain DSM 17117 / CIP 110805 / LMG 28347 / Deep ecotype).